The sequence spans 298 residues: Probable porphobilinogen deaminase (298 aa).

Cys241 is subject to S-(dipyrrolylmethanemethyl)cysteine.

This sequence belongs to the HMBS family. Dipyrromethane is required as a cofactor.

The catalysed reaction is 4 porphobilinogen + H2O = hydroxymethylbilane + 4 NH4(+). The protein operates within porphyrin-containing compound metabolism; protoporphyrin-IX biosynthesis; coproporphyrinogen-III from 5-aminolevulinate: step 2/4. Its function is as follows. Tetrapolymerization of the monopyrrole PBG into the hydroxymethylbilane pre-uroporphyrinogen in several discrete steps. This is Probable porphobilinogen deaminase from Methanopyrus kandleri (strain AV19 / DSM 6324 / JCM 9639 / NBRC 100938).